Reading from the N-terminus, the 468-residue chain is Shaggy-related protein kinase theta (468 aa).

Disordered regions lie at residues 1-53 (MNVM…DQST) and 91-112 (HANR…CGTE). Residues 134-418 (YMAQRVVGTG…ALEACAHPFF (285 aa)) form the Protein kinase domain. ATP contacts are provided by residues 140–148 (VGTGSFGVV) and Lys163. Catalysis depends on Asp259, which acts as the Proton acceptor. Tyr294 is subject to Phosphotyrosine.

It belongs to the protein kinase superfamily. CMGC Ser/Thr protein kinase family. GSK-3 subfamily. In terms of processing, autophosphorylated mainly on threonine and serine residues. In developing pollen.

The catalysed reaction is L-seryl-[protein] + ATP = O-phospho-L-seryl-[protein] + ADP + H(+). It carries out the reaction L-threonyl-[protein] + ATP = O-phospho-L-threonyl-[protein] + ADP + H(+). Its function is as follows. May mediate extracellular signals to regulate transcription in differentiating cells. The chain is Shaggy-related protein kinase theta from Brassica napus (Rape).